Here is a 434-residue protein sequence, read N- to C-terminus: Nicotinate phosphoribosyltransferase (434 aa).

Phosphohistidine; by autocatalysis is present on His242.

It belongs to the NAPRTase family. In terms of processing, transiently phosphorylated on a His residue during the reaction cycle. Phosphorylation strongly increases the affinity for substrates and increases the rate of nicotinate D-ribonucleotide production. Dephosphorylation regenerates the low-affinity form of the enzyme, leading to product release.

It carries out the reaction nicotinate + 5-phospho-alpha-D-ribose 1-diphosphate + ATP + H2O = nicotinate beta-D-ribonucleotide + ADP + phosphate + diphosphate. Its pathway is cofactor biosynthesis; NAD(+) biosynthesis; nicotinate D-ribonucleotide from nicotinate: step 1/1. Functionally, catalyzes the synthesis of beta-nicotinate D-ribonucleotide from nicotinate and 5-phospho-D-ribose 1-phosphate at the expense of ATP. This Brucella abortus (strain S19) protein is Nicotinate phosphoribosyltransferase.